The chain runs to 255 residues: MENKRPLILVSNDDGIMAKGISELIKFLRPLGEIVVMAPDAPRSGSGCALTVTQPVHYQLLKKDVGLTVYKCSGTPTDCIKLARNQILDRKPDLVVGGINHGDNSATNVHYSGTMGIVIEGCLNGIPSIGFSICDHAPGADFDAAGPYVRRIAAMVLEKGLPPLTCLNVNFPNTQEIKGVRICEQAKGHWSGEWQACPRRDDANFYWLTGEFIDHEPENEKNDHWALANGYVAITPTVVDMTAYHFMDELKSWEL.

4 residues coordinate a divalent metal cation: Asp13, Asp14, Ser44, and Asn100.

It belongs to the SurE nucleotidase family. A divalent metal cation serves as cofactor.

The protein localises to the cytoplasm. The enzyme catalyses a ribonucleoside 5'-phosphate + H2O = a ribonucleoside + phosphate. Its function is as follows. Nucleotidase that shows phosphatase activity on nucleoside 5'-monophosphates. The chain is 5'-nucleotidase SurE from Bacteroides fragilis (strain ATCC 25285 / DSM 2151 / CCUG 4856 / JCM 11019 / LMG 10263 / NCTC 9343 / Onslow / VPI 2553 / EN-2).